The chain runs to 605 residues: Kelch-like protein 41b (605 aa).

The region spanning 32–102 is the BTB domain; that stretch reads VDCTLKIGDR…YSAEIDLVDD (71 aa). A BACK domain is found at 136–238; that stretch reads CLAVFRLGLV…PEKYFREKVE (103 aa). 5 Kelch repeats span residues 345–397, 398–446, 447–494, 496–541, and 543–598; these read QLFI…ESEN, LLFA…SHNN, LVYC…VHKG, IIVT…SSGG, and LFSI…MRLN.

The protein resides in the cytoplasm. It is found in the cytoskeleton. It localises to the sarcoplasmic reticulum membrane. The protein localises to the endoplasmic reticulum membrane. Its function is as follows. Involved in skeletal muscle development and maintenance. This chain is Kelch-like protein 41b, found in Danio rerio (Zebrafish).